A 393-amino-acid chain; its full sequence is Sialyltransferase-like protein 1 (393 aa).

At 1 to 8 the chain is on the cytoplasmic side; the sequence is MKRPLRRP. A helical; Signal-anchor for type II membrane protein transmembrane segment spans residues 9–27; that stretch reads FAVLLFVVLCAAASFPSVL. Residues 28-393 are Lumenal-facing; that stretch reads RRSVGPAPVL…IAVPPVVFYH (366 aa). N-linked (GlcNAc...) asparagine glycans are attached at residues N49, N212, and N258.

The protein belongs to the glycosyltransferase 29 family. Expressed in leaves and stalks. Expressed at low levels in roots.

It localises to the golgi apparatus membrane. In terms of biological role, possesses sialyltransferase-like activity in vitro. Transfers sialic acid to the oligosaccharide Gal-beta-1,3-GalNAc and to glycoproteins such as asialofetuin, alpha-1-acid glycoprotein (NeuAc-alpha-2,3-Gal-beta-1,3-GalNAc-) and andasialo-alpha-1-acid glycoprotein. The transferred sialic acid is linked to galactose of Gal-beta-1,3-GalNAc through alpha-2,6-linkage. The chain is Sialyltransferase-like protein 1 from Oryza sativa subsp. japonica (Rice).